The sequence spans 467 residues: Fumarate hydratase class II (467 aa).

Substrate-binding positions include 99-101 (SGT), 130-133 (HPND), 140-142 (SSN), and T188. Catalysis depends on H189, which acts as the Proton donor/acceptor. The active site involves S319. Residues S320 and 325–327 (KVN) contribute to the substrate site.

Belongs to the class-II fumarase/aspartase family. Fumarase subfamily. In terms of assembly, homotetramer.

It is found in the cytoplasm. It catalyses the reaction (S)-malate = fumarate + H2O. Its pathway is carbohydrate metabolism; tricarboxylic acid cycle; (S)-malate from fumarate: step 1/1. Functionally, involved in the TCA cycle. Catalyzes the stereospecific interconversion of fumarate to L-malate. This chain is Fumarate hydratase class II, found in Thermosynechococcus vestitus (strain NIES-2133 / IAM M-273 / BP-1).